Consider the following 69-residue polypeptide: DNA-directed RNA polymerase subunit epsilon (69 aa).

Belongs to the RNA polymerase subunit epsilon family. In terms of assembly, RNAP is composed of a core of 2 alpha, a beta and a beta' subunit. The core is associated with a delta subunit, and at least one of epsilon or omega. When a sigma factor is associated with the core the holoenzyme is formed, which can initiate transcription.

The enzyme catalyses RNA(n) + a ribonucleoside 5'-triphosphate = RNA(n+1) + diphosphate. Functionally, a non-essential component of RNA polymerase (RNAP). This Bacillus pumilus (strain SAFR-032) protein is DNA-directed RNA polymerase subunit epsilon.